Here is a 157-residue protein sequence, read N- to C-terminus: uncharacterized protein (157 aa).

An N-acetyltransferase domain is found at 9-154 (LLINYKTLDE…ETNLNAVTNE (146 aa)).

This is an uncharacterized protein from Bacillus cereus (strain ATCC 14579 / DSM 31 / CCUG 7414 / JCM 2152 / NBRC 15305 / NCIMB 9373 / NCTC 2599 / NRRL B-3711).